Consider the following 194-residue polypeptide: 7-methyl-GTP pyrophosphatase (194 aa).

Catalysis depends on aspartate 71, which acts as the Proton acceptor.

This sequence belongs to the Maf family. YceF subfamily. It depends on a divalent metal cation as a cofactor.

It localises to the cytoplasm. It carries out the reaction N(7)-methyl-GTP + H2O = N(7)-methyl-GMP + diphosphate + H(+). Functionally, nucleoside triphosphate pyrophosphatase that hydrolyzes 7-methyl-GTP (m(7)GTP). May have a dual role in cell division arrest and in preventing the incorporation of modified nucleotides into cellular nucleic acids. The chain is 7-methyl-GTP pyrophosphatase from Aromatoleum aromaticum (strain DSM 19018 / LMG 30748 / EbN1) (Azoarcus sp. (strain EbN1)).